Reading from the N-terminus, the 386-residue chain is Protein MGF 360-4L (386 aa).

It belongs to the asfivirus MGF 360 family.

In terms of biological role, plays a role in virus cell tropism, and may be required for efficient virus replication in macrophages. The protein is Protein MGF 360-4L of Ornithodoros (relapsing fever ticks).